A 124-amino-acid chain; its full sequence is Galanin peptides (124 aa).

Residues methionine 1 to serine 19 form the signal peptide. Positions alanine 20–glutamate 30 are excised as a propeptide. A Threonine amide modification is found at threonine 61. Phosphoserine occurs at positions 117 and 118.

It belongs to the galanin family.

It is found in the secreted. Endocrine hormone of the central and peripheral nervous systems that binds and activates the G protein-coupled receptors GALR1, GALR2, and GALR3. This small neuropeptide may regulate diverse physiologic functions including contraction of smooth muscle of the gastrointestinal and genitourinary tract, growth hormone and insulin release and adrenal secretion. This is Galanin peptides (Gal) from Rattus norvegicus (Rat).